The primary structure comprises 106 residues: Integration host factor subunit alpha (106 aa).

It belongs to the bacterial histone-like protein family. In terms of assembly, heterodimer of an alpha and a beta chain.

In terms of biological role, this protein is one of the two subunits of integration host factor, a specific DNA-binding protein that functions in genetic recombination as well as in transcriptional and translational control. This Paramagnetospirillum magneticum (strain ATCC 700264 / AMB-1) (Magnetospirillum magneticum) protein is Integration host factor subunit alpha.